A 489-amino-acid polypeptide reads, in one-letter code: MVSFLDRPPTEFDLILDPAKLNSAAFFSNDEFRAVLKSLIGDLKKNQRPNYFNSLVDQMINVYAHISAGEHADALVRIIDATCVVVTNLPSNVFLKKLKTNKFTDSIDYLILPHFILWDYNFVVFLNNTFNSKHENSLVDISGALQKIKLTHGVIKDQLQSKNGYAVQYSYSTFLNTASFYANVQCLNGVNEVMPPLHSVRRYFGRDVPHARAWTTRHPNISQLSTQVSDVRVNDRDTDWNVKVGLGIFPGANTDCDGDKKIITYLPRPNSLIDLECLLYGDPRYSFICFDKNRLTFVSQQIFYLHKNVEAVERLLKTMPLAFALWRIHANVKFSARLELLLRDFCLVASSNASYLLFKQLTELIKDEEMVCADEELFGLSGQFTDMVNSGAKGSAALIESTRQYARTRATDIDIVSTRATTSLNSYISSHNKVQVCGADIYHNTAVLQNLYIKNNYICYKNDDRRIASICALPSEYLFPEHLLDLFIE.

Belongs to the baculoviridae LEF-9 family.

Involved in late/very late gene activation. This is Late expression factor 9 (LEF-9) from Orgyia pseudotsugata multicapsid polyhedrosis virus (OpMNPV).